The following is a 118-amino-acid chain: Small ribosomal subunit protein uS13 (118 aa).

The tract at residues 94–118 is disordered; it reads SLPLRGQRTKTNARTRKGPRKPIKK.

Belongs to the universal ribosomal protein uS13 family. In terms of assembly, part of the 30S ribosomal subunit. Forms a loose heterodimer with protein S19. Forms two bridges to the 50S subunit in the 70S ribosome.

Its function is as follows. Located at the top of the head of the 30S subunit, it contacts several helices of the 16S rRNA. In the 70S ribosome it contacts the 23S rRNA (bridge B1a) and protein L5 of the 50S subunit (bridge B1b), connecting the 2 subunits; these bridges are implicated in subunit movement. Contacts the tRNAs in the A and P-sites. In Colwellia psychrerythraea (strain 34H / ATCC BAA-681) (Vibrio psychroerythus), this protein is Small ribosomal subunit protein uS13.